The sequence spans 172 residues: MINVEIIRNYDKWREHKQINKALIKKVTQNVLLRFDNFSKIKQFELSILLTNTAEILTLNKQFRNIDKATNVLSFPSNKLNWQDLCFSNVSPKLELLIGYDYMHLGDIAFCYEVIYNESYEQQKTSENHFIHLLIHSILHLIGFDHQNDTEANIMENLEIEILSYFGIASPY.

Residues H136, H140, and H146 each contribute to the Zn(2+) site.

It belongs to the endoribonuclease YbeY family. Zn(2+) is required as a cofactor.

Its subcellular location is the cytoplasm. Functionally, single strand-specific metallo-endoribonuclease involved in late-stage 70S ribosome quality control and in maturation of the 3' terminus of the 16S rRNA. The protein is Endoribonuclease YbeY of Rickettsia canadensis (strain McKiel).